Reading from the N-terminus, the 474-residue chain is MPPSGPRAALFLLPSLLLLRAVLAVPLERGAPKEENPATESPDTGLYYHRYLQEVINVLETDGHFREKLQAANAEDIKSGKLSRELDFVSHHVRTKLDELKRQEVSRLRMLLKAKMDAQQEPNIQLDHLNLLKQFEHLDPQNQHTFEARDLELLIQTATRDLAQYDAAHHEEFKRYEMLKEHERRRYLESLGEEQRKEAERKLEEQQRRHREHPKVNVPGSQAQLKEVWEELDGLDPNRFNPKTFFILHDINSDGVLDEQELEALFTKELEKVYDPKNEDDDMREMEEERLRMREHVMKNVDTNQDRLVTLEEFLASTQRKEFGDTGEGWEQGKAGVPLPMAPVLTLQTVEMHPAYTEEELRRFEEELAAREAELNAKAQRLSQETEALGRSQGRLEAQKRELQQAVLQMEQRKQQQQSHNNPAPGPEGQLKFHPDTDDVPVPAPAGDQKDVDASEKKVPEQTPEPPQLDSQHL.

The N-terminal stretch at 1 to 24 (MPPSGPRAALFLLPSLLLLRAVLA) is a signal peptide. Serine 83 carries the phosphoserine modification. Phosphothreonine is present on threonine 145. A coiled-coil region spans residues 147–215 (EARDLELLIQ…QQRRHREHPK (69 aa)). The segment covering 190–207 (SLGEEQRKEAERKLEEQQ) has biased composition (basic and acidic residues). The disordered stretch occupies residues 190 to 218 (SLGEEQRKEAERKLEEQQRRHREHPKVNV). The binds to GNAI2 and GNAI3 stretch occupies residues 225–318 (LKEVWEELDG…VTLEEFLAST (94 aa)). 2 consecutive EF-hand domains span residues 237–272 (PNRF…ELEK) and 289–324 (ERLR…KEFG). Residues aspartate 250, asparagine 252, aspartate 254, glutamate 261, aspartate 302, asparagine 304, aspartate 306, and glutamate 313 each contribute to the Ca(2+) site. Positions 300 to 330 (NVDTNQDRLVTLEEFLASTQRKEFGDTGEGW) match the GBA motif. Positions 355–422 (AYTEEELRRF…RKQQQQSHNN (68 aa)) form a coiled coil. Residues 382 to 474 (LSQETEALGR…EPPQLDSQHL (93 aa)) are disordered. Serine 383 bears the Phosphoserine mark. Positions 448–460 (DQKDVDASEKKVP) are enriched in basic and acidic residues. Serine 471 is modified (phosphoserine).

It belongs to the nucleobindin family. Interacts (via GBA motif) with guanine nucleotide-binding protein G(i) alpha subunits GNAI1, GNAI2 and GNAI3 with higher affinity for GNAI1 and GNAI3 than for GNAI2. Preferentially interacts with inactive rather than active GNAI3. Interaction with GNAI3 is inhibited when NUCB1 binds calcium, probably due to a conformational change which renders the GBA motif inaccessible. In terms of tissue distribution, expressed in bone where it is detected in the soft tissue in the center of the osteon and in the osteocyte lacuna (at protein level).

It localises to the golgi apparatus. It is found in the cis-Golgi network membrane. The protein localises to the cytoplasm. Its subcellular location is the secreted. Its function is as follows. Major calcium-binding protein of the Golgi which may have a role in calcium homeostasis. Acts as a non-receptor guanine nucleotide exchange factor which binds to and activates alpha subunits of guanine nucleotide-binding proteins (G proteins). The chain is Nucleobindin-1 (NUCB1) from Bos taurus (Bovine).